Here is a 187-residue protein sequence, read N- to C-terminus: UPF0301 protein Clim_0777 (187 aa).

This sequence belongs to the UPF0301 (AlgH) family.

The chain is UPF0301 protein Clim_0777 from Chlorobium limicola (strain DSM 245 / NBRC 103803 / 6330).